We begin with the raw amino-acid sequence, 230 residues long: Ribose-5-phosphate isomerase A (230 aa).

Substrate contacts are provided by residues 32–35 (TGST), 85–88 (DGAD), and 98–101 (KGGG). E107 serves as the catalytic Proton acceptor. K125 is a binding site for substrate.

It belongs to the ribose 5-phosphate isomerase family. In terms of assembly, homodimer.

It carries out the reaction aldehydo-D-ribose 5-phosphate = D-ribulose 5-phosphate. The protein operates within carbohydrate degradation; pentose phosphate pathway; D-ribose 5-phosphate from D-ribulose 5-phosphate (non-oxidative stage): step 1/1. Catalyzes the reversible conversion of ribose-5-phosphate to ribulose 5-phosphate. The polypeptide is Ribose-5-phosphate isomerase A (Burkholderia vietnamiensis (strain G4 / LMG 22486) (Burkholderia cepacia (strain R1808))).